A 587-amino-acid chain; its full sequence is Folylpolyglutamate synthase, mitochondrial (587 aa).

The transit peptide at 1–42 (MSRARSHLRAALFLAAASARGITTQVAARRGLSAWPVPQEPS) directs the protein to the mitochondrion. The residue at position 43 (M43) is an N-acetylmethionine. Residue 106-109 (GKGS) coordinates ATP. S130, E200, and H228 together coordinate Mg(2+). Residues R363 and D377 each coordinate ATP. S539 bears the Phosphoserine mark.

It belongs to the folylpolyglutamate synthase family. Monomer. The cofactor is K(+). Requires NH4(+) as cofactor.

It localises to the mitochondrion inner membrane. It is found in the mitochondrion matrix. The protein resides in the cytoplasm. The enzyme catalyses (6S)-5,6,7,8-tetrahydrofolyl-(gamma-L-Glu)(n) + L-glutamate + ATP = (6S)-5,6,7,8-tetrahydrofolyl-(gamma-L-Glu)(n+1) + ADP + phosphate + H(+). The protein operates within cofactor biosynthesis; tetrahydrofolylpolyglutamate biosynthesis. With respect to regulation, activated by 10 mM sodium bicarbonate. In terms of biological role, catalyzes conversion of folates to polyglutamate derivatives allowing concentration of folate compounds in the cell and the intracellular retention of these cofactors, which are important substrates for most of the folate-dependent enzymes that are involved in one-carbon transfer reactions involved in purine, pyrimidine and amino acid synthesis. Unsubstituted reduced folates are the preferred substrates. Metabolizes methotrexate (MTX) to polyglutamates. The polypeptide is Folylpolyglutamate synthase, mitochondrial (FPGS) (Homo sapiens (Human)).